Consider the following 1790-residue polypeptide: Atrochrysone carboxylic acid synthase (1790 aa).

The tract at residues 27-265 (RDLQDLFRQA…ALPVYGGLCH (239 aa)) is N-terminal acylcarrier protein transacylase domain (SAT). Residues 399–833 (QSKLAIVGMS…GGNTTMILED (435 aa)) form the Ketosynthase family 3 (KS3) domain. Residues Cys-572, His-708, and His-751 each act as for beta-ketoacyl synthase activity in the active site. The malonyl-CoA:ACP transacylase (MAT) domain stretch occupies residues 934 to 1254 (FSFTGQGASH…IAQLYTVGVD (321 aa)). The segment at 1323–1475 (QQIVEQVFDT…SLTHLVRDRI (153 aa)) is N-terminal hotdog fold. The 312-residue stretch at 1323 to 1634 (QQIVEQVFDT…FHRYRRILLE (312 aa)) folds into the PKS/mFAS DH domain. Residue His-1357 is the Proton acceptor; for dehydratase activity of the active site. The interval 1357-1631 (HRMNDCGVAT…GIEFHRYRRI (275 aa)) is product template (PT) domain. The C-terminal hotdog fold stretch occupies residues 1487-1634 (ANRLSHNMAY…FHRYRRILLE (148 aa)). Residue Asp-1545 is the Proton donor; for dehydratase activity of the active site. Positions 1644 to 1667 (NLDDTTETKDISSSTQHSVPVSRQ) are disordered. Over residues 1654–1664 (ISSSTQHSVPV) the composition is skewed to polar residues. One can recognise a Carrier domain in the interval 1715–1789 (SSITNRAMQL…DLRNWLEETY (75 aa)). Ser-1749 is subject to O-(pantetheine 4'-phosphoryl)serine.

It carries out the reaction holo-[ACP] + 8 malonyl-CoA + 8 H(+) = atrochrysone carboxyl-[ACP] + 8 CO2 + 8 CoA + 2 H2O. The protein operates within pigment biosynthesis. Functionally, non-reducing polyketide synthase; part of the gene cluster that mediates the biosynthesis of the bianthraquinone cladofulvin, a conidial pigment not required for virulence but that plays a role in fitness and resistance to environmental stresses including UV light and low-temperature stress. The pathway begins with the synthesis of atrochrysone thioester by the polyketide synthase (PKS) claG. The atrochrysone carboxyl ACP thioesterase claF then breaks the thioester bond and releases the atrochrysone carboxylic acid from claG. This compound is decarboxylated by claH to yield emodin, which is further converted to chrysophanol hydroquinone by the reductase claC and the dehydratase claB. The cytochrome P450 monooxygenase claM then catalyzes the dimerization of nataloe-emodin to cladofulvin. The polypeptide is Atrochrysone carboxylic acid synthase (Passalora fulva (Tomato leaf mold)).